The chain runs to 447 residues: Phosphoglucosamine mutase (447 aa).

S106 acts as the Phosphoserine intermediate in catalysis. Residues S106, D245, D247, and D249 each contribute to the Mg(2+) site. Residue S106 is modified to Phosphoserine.

It belongs to the phosphohexose mutase family. The cofactor is Mg(2+). In terms of processing, activated by phosphorylation.

It catalyses the reaction alpha-D-glucosamine 1-phosphate = D-glucosamine 6-phosphate. In terms of biological role, catalyzes the conversion of glucosamine-6-phosphate to glucosamine-1-phosphate. The sequence is that of Phosphoglucosamine mutase from Cupriavidus pinatubonensis (strain JMP 134 / LMG 1197) (Cupriavidus necator (strain JMP 134)).